The primary structure comprises 857 residues: MRLVHGKDAVNALDVSWLSPILVRDPTSPSESAWDLFATFMRTRTMKSTATNMNQHPTTAQICRRFATRLFRGTVSIRPLTLTLGCLAASASASLVAQETATNAAASQADAISKCPVMGNPAGPNRHTVSGAMGNGDWWPNQLNLDMLHQNSVKSNPMGEDFDYAAAFNSLDLAAVKADIKELMNTSQDWWPSDYGHYGPLFIRMAWHSAGTYRVSDGRGGASDGTQRFAPLNSWPDNANLDKARRLLWPIKQKYGSKISWADLMVLTGNCALEDMGFETFGFAGGREDVWEPQKDVYWGPETEWLGDKRYSGDRDLQNPLAAVQMGLIYVNPEGPNGKPDPIAAAKDIRETFGRMAMNDEETVALIAGGHTFGKAHGAASPDGNMGVEPEGEGLAAQGLGWINTHGTGNAGDTITSGLEGAWTSTPAEWSHGYFENLFGYEWKLVKSPAGAWQWTPTDENAKGTVPDAHDASKSHAPMMFTTDLALRMDPEYGKISRRFHDNPEQFEKAFAKAWYKLTHRDMGPVSRLLGDSVPEPQLWQDPIPEATFDVIGSKEIEQLKQKILATNLTSSQLVSTAWASASTFRNSDMRGGANGARIRLAPQKDWEVNEPAELASVLTTLEGVQKEFNASRKDGKQVSMADLIVLGGCAGVEAAAMKAGHAIQVPFTPGRTDATQEMTDVESFEPLKPIADGFRNYQGHNADRPAEEMLVDKANLLSLTAPEMTVLVGGMRALDTNAGAGPLADLGKLTKRPGALTNDFFVNLLDMNTVWKQSPMCEHFFEGRDRESGNLKWTASRVDLVFGSNSQLRGIAEVYASEDAKEKFVKDFVNAWTKVMNLDRFDVNDSESTETQVAAK.

Positions 207–330 form a cross-link, tryptophyl-tyrosyl-methioninium (Trp-Tyr) (with M-356); it reads WHSAGTYRVS…LAAVQMGLIY (124 aa). His208 functions as the Proton acceptor in the catalytic mechanism. The tryptophyl-tyrosyl-methioninium (Tyr-Met) (with W-207) cross-link spans 330–356; sequence YVNPEGPNGKPDPIAAAKDIRETFGRM. Position 371 (His371) interacts with heme b.

The protein belongs to the peroxidase family. Peroxidase/catalase subfamily. As to quaternary structure, homodimer or homotetramer. Heme b serves as cofactor. Post-translationally, formation of the three residue Trp-Tyr-Met cross-link is important for the catalase, but not the peroxidase activity of the enzyme.

The enzyme catalyses H2O2 + AH2 = A + 2 H2O. The catalysed reaction is 2 H2O2 = O2 + 2 H2O. Its function is as follows. Bifunctional enzyme with both catalase and broad-spectrum peroxidase activity. The sequence is that of Catalase-peroxidase from Rhodopirellula baltica (strain DSM 10527 / NCIMB 13988 / SH1).